Reading from the N-terminus, the 249-residue chain is Proteasome activator complex subunit 1 (249 aa).

The disordered stretch occupies residues 55 to 102; sequence SNLKAPLDIPVPDPVKEKEKEERRKQQEKEDKDEKKKGEDEDKGPPCG. Residues 68–98 are compositionally biased toward basic and acidic residues; that stretch reads PVKEKEKEERRKQQEKEDKDEKKKGEDEDKG.

The protein belongs to the PA28 family. Heterodimer of PSME1 and PSME2, which forms a hexameric ring. PSME1 can form homoheptamers.

Its function is as follows. Implicated in immunoproteasome assembly and required for efficient antigen processing. The PA28 activator complex enhances the generation of class I binding peptides by altering the cleavage pattern of the proteasome. This Bos taurus (Bovine) protein is Proteasome activator complex subunit 1 (PSME1).